The sequence spans 113 residues: UPF0482 protein YnfB (113 aa).

Positions 1–28 (MKITLSKRIGLLAILLPCALALSTTVHA) are cleaved as a signal peptide.

The protein belongs to the UPF0482 family.

The sequence is that of UPF0482 protein YnfB from Escherichia coli O8 (strain IAI1).